The following is a 353-amino-acid chain: Photosystem II protein D1 (353 aa).

The residue at position 2 (Thr2) is an N-acetylthreonine. Phosphothreonine is present on Thr2. The next 3 membrane-spanning stretches (helical) occupy residues 29–46 (YIGWFGVIMIPCLLTATS), 118–133 (HFLLGVACYMGREWEL), and 142–156 (WIAVAYSAPVAAATA). His118 is a binding site for chlorophyll a. Tyr126 contributes to the pheophytin a binding site. The [CaMn4O5] cluster site is built by Asp170 and Glu189. Residues 197 to 218 (FHMLGVAGVFGGSLFSAMHGSL) traverse the membrane as a helical segment. His198 contacts chlorophyll a. Residues His215 and 264 to 265 (SF) contribute to the a quinone site. Fe cation is bound at residue His215. His272 serves as a coordination point for Fe cation. A helical membrane pass occupies residues 274–288 (FLAAWPVVGIWFTAL). [CaMn4O5] cluster contacts are provided by His332, Glu333, Asp342, and Ala344. Positions 345–353 (SVEAPSVNA) are excised as a propeptide.

It belongs to the reaction center PufL/M/PsbA/D family. In terms of assembly, PSII is composed of 1 copy each of membrane proteins PsbA, PsbB, PsbC, PsbD, PsbE, PsbF, PsbH, PsbI, PsbJ, PsbK, PsbL, PsbM, PsbT, PsbX, PsbY, PsbZ, Psb30/Ycf12, at least 3 peripheral proteins of the oxygen-evolving complex and a large number of cofactors. It forms dimeric complexes. The D1/D2 heterodimer binds P680, chlorophylls that are the primary electron donor of PSII, and subsequent electron acceptors. It shares a non-heme iron and each subunit binds pheophytin, quinone, additional chlorophylls, carotenoids and lipids. D1 provides most of the ligands for the Mn4-Ca-O5 cluster of the oxygen-evolving complex (OEC). There is also a Cl(-1) ion associated with D1 and D2, which is required for oxygen evolution. The PSII complex binds additional chlorophylls, carotenoids and specific lipids. serves as cofactor. Tyr-161 forms a radical intermediate that is referred to as redox-active TyrZ, YZ or Y-Z. Post-translationally, C-terminally processed by CTPA; processing is essential to allow assembly of the oxygen-evolving complex and thus photosynthetic growth.

The protein resides in the plastid. Its subcellular location is the chloroplast thylakoid membrane. It catalyses the reaction 2 a plastoquinone + 4 hnu + 2 H2O = 2 a plastoquinol + O2. Photosystem II (PSII) is a light-driven water:plastoquinone oxidoreductase that uses light energy to abstract electrons from H(2)O, generating O(2) and a proton gradient subsequently used for ATP formation. It consists of a core antenna complex that captures photons, and an electron transfer chain that converts photonic excitation into a charge separation. The D1/D2 (PsbA/PsbD) reaction center heterodimer binds P680, the primary electron donor of PSII as well as several subsequent electron acceptors. In Oltmannsiellopsis viridis (Marine flagellate), this protein is Photosystem II protein D1.